We begin with the raw amino-acid sequence, 201 residues long: MBF complex negative regulatory component yox1 (201 aa).

Residues 1-22 (MSLSDSPSKSGNTGKDLISNNE) are compositionally biased toward polar residues. The disordered stretch occupies residues 1–42 (MSLSDSPSKSGNTGKDLISNNEAKNHEDEETHQKKRRRRTTD). The span at 23-32 (AKNHEDEETH) shows a compositional bias: basic and acidic residues. Residues 33–92 (QKKRRRRTTDAEATLLEQYFLKTPKPSLIERQELSKKLKSSMTPRELQIWFQNKRQSLRR) constitute a DNA-binding region (homeobox).

Component of the MBF transcription factor complex. Phosphorylated in response to hydroxyurea. Phosphorylation inhibits the repressor activity and is dependent on rad3. However, the regulation of yox1 by rad3 is probably indirect.

It is found in the nucleus. Functionally, negative regulatory component of the MBF transcription factor complex involved in cell-cycle G1/S phase-specific gene expression and more particularly DNA replication checkpoint-dependent gene expression. This chain is MBF complex negative regulatory component yox1 (yox1), found in Schizosaccharomyces pombe (strain 972 / ATCC 24843) (Fission yeast).